Consider the following 975-residue polypeptide: MKLEHPDRLMNRTPLSLAALETHDAFAERHIGPDAASQQAMLDTLGFASRAALIDAVIPASIRRAETLPLGPFAQPKSEAEALAALRALADKNQVFRSYIGQGYHDTHTPAVILRNVLENPAWYTAYTPYQPEISQGRLEALLNFQQMVADLTGLAISNASLLDEATAAAEAMTLLQRTGKPKSNVFYVADDVLPQTLEVIRTRALPIGIEVKTGPAADAAQANAFGVLLQYPGVNGDVRDYRALTDAIHAAGGHVVVAADLLALTVLTPPGEWGADVAIGNTQRFGVPMGFGGPHAAYLAVRDEFKRQMPGRLVGVTVDAQGKPALRLALQTREQHIRREKATSNVCTAQALLAIMASMYAVYHGPHGLKTIALRVNRIAALLAAGVKQLGFATVNDTFFDTLTIDTGARTAQVHEFAKAKRINLRRVSDTQVGVSVDETTTRDDLADLLDVFAQAAGGTAPAVDALDAGLAGVAALPAGLERTSAYLTHHVFNRHHSETEMLRYLRSLSDKDLALDRSMIPLGSCTMKLNATSEMLPVTWPEFGGIHPFAPAEQTVGYREMIDQLEEMLVAATGYAAVSLQPNAGSQGEYAGLLIIHAYHASRGEGHRDVCLIPASAHGTNPASAHMAGMKVVVVACDAQGNVDIADLKAKAEQHSANLAAIMITYPSTHGVFEQNVREICEIVHAHGGQVYVDGANMNAMVGLTAPGQFGGDVSHLNLHKTFCIPHGGGGPGVGPVAVGAHLAKFLPNQRSTGYARAEDGIGAVSAAPYGSASILPISWMYIAMMGAKNLTAATETAILNANYIAKRLAPHYPVLYSGPGGLVAHECILDLRPIKETSGISVDDVAKRLMDYGFHAPTMSFPVPGTLMVEPTESESQEELDRFIAAMIAIREEIRAVEEGRADREDNPLRHAPHTAAVVTANEWPHAYSREQAAYPVASLGTNKYWPPVGRADNAYGDRNLFCSCVPMSDYA.

Position 723 is an N6-(pyridoxal phosphate)lysine (lysine 723).

This sequence belongs to the GcvP family. The glycine cleavage system is composed of four proteins: P, T, L and H. Pyridoxal 5'-phosphate is required as a cofactor.

It catalyses the reaction N(6)-[(R)-lipoyl]-L-lysyl-[glycine-cleavage complex H protein] + glycine + H(+) = N(6)-[(R)-S(8)-aminomethyldihydrolipoyl]-L-lysyl-[glycine-cleavage complex H protein] + CO2. Its function is as follows. The glycine cleavage system catalyzes the degradation of glycine. The P protein binds the alpha-amino group of glycine through its pyridoxal phosphate cofactor; CO(2) is released and the remaining methylamine moiety is then transferred to the lipoamide cofactor of the H protein. This is Glycine dehydrogenase (decarboxylating) from Burkholderia cenocepacia (strain HI2424).